A 161-amino-acid chain; its full sequence is Allophycocyanin alpha chain (161 aa).

The residue at position 71 (N71) is an N4-methylasparagine. Residue C81 participates in (2R,3E)-phycocyanobilin binding.

The protein belongs to the phycobiliprotein family. As to quaternary structure, heterodimer of an alpha and a beta chain. Contains one covalently linked phycocyanobilin chromophore.

It is found in the plastid. The protein localises to the chloroplast thylakoid membrane. Light-harvesting photosynthetic bile pigment-protein from the phycobiliprotein complex. Allophycocyanin has a maximum absorption at approximately 650 nanometers. This Cyanidium caldarium (Red alga) protein is Allophycocyanin alpha chain (apcA).